The chain runs to 416 residues: Histidine--tRNA ligase (416 aa).

The protein belongs to the class-II aminoacyl-tRNA synthetase family.

The protein localises to the cytoplasm. It carries out the reaction tRNA(His) + L-histidine + ATP = L-histidyl-tRNA(His) + AMP + diphosphate + H(+). This is Histidine--tRNA ligase from Methanococcus maripaludis (strain DSM 14266 / JCM 13030 / NBRC 101832 / S2 / LL).